Reading from the N-terminus, the 419-residue chain is Histidine--tRNA ligase (419 aa).

Belongs to the class-II aminoacyl-tRNA synthetase family. In terms of assembly, homodimer.

Its subcellular location is the cytoplasm. The enzyme catalyses tRNA(His) + L-histidine + ATP = L-histidyl-tRNA(His) + AMP + diphosphate + H(+). The sequence is that of Histidine--tRNA ligase from Novosphingobium aromaticivorans (strain ATCC 700278 / DSM 12444 / CCUG 56034 / CIP 105152 / NBRC 16084 / F199).